A 159-amino-acid polypeptide reads, in one-letter code: uncharacterized protein (159 aa).

Residues His44, His124, and His128 each contribute to the a divalent metal cation site.

The protein belongs to the DinB family.

This is an uncharacterized protein from Bacillus subtilis (strain 168).